Reading from the N-terminus, the 201-residue chain is LexA repressor (201 aa).

Residues 28–48 (RAEIAARLGFRSPNAAEEHLK) constitute a DNA-binding region (H-T-H motif). Residues S118 and K155 each act as for autocatalytic cleavage activity in the active site.

The protein belongs to the peptidase S24 family. Homodimer.

It catalyses the reaction Hydrolysis of Ala-|-Gly bond in repressor LexA.. In terms of biological role, represses a number of genes involved in the response to DNA damage (SOS response), including recA and lexA. In the presence of single-stranded DNA, RecA interacts with LexA causing an autocatalytic cleavage which disrupts the DNA-binding part of LexA, leading to derepression of the SOS regulon and eventually DNA repair. The sequence is that of LexA repressor from Photorhabdus laumondii subsp. laumondii (strain DSM 15139 / CIP 105565 / TT01) (Photorhabdus luminescens subsp. laumondii).